Reading from the N-terminus, the 449-residue chain is Probable ubiquitin carboxyl-terminal hydrolase 8 (449 aa).

The UBP-type zinc-finger motif lies at 6 to 113 (EGCQHLKLKP…FKIKNIKAWQ (108 aa)). 12 residues coordinate Zn(2+): C8, H10, C38, C41, C51, C54, C59, H64, H68, H74, C87, and C90. Residues 145 to 435 (RGIQNLGATC…QAYLLFYHER (291 aa)) form the USP domain. C154 acts as the Nucleophile in catalysis. H178, C183, C188, C191, H246, C257, C259, H262, C275, C278, C317, and C320 together coordinate Zn(2+). The active-site Proton acceptor is the H395.

This sequence belongs to the peptidase C19 family. UBP8 subfamily. As to quaternary structure, component of the 1.8 MDa SAGA (Spt-Ada-Gcn5 acetyltransferase) complex, which is composed of 19 subunits tra1, spt7, taf5, ngg1/ada3, sgf73, spt20, spt8, taf12, taf6, hfi1/ada1, ubp8, gcn5, ada2, spt3, sgf29, taf10, taf9, sgf11 and sus1. The SAGA complex is composed of 4 modules, namely the HAT (histone acetyltransferase) module (gcn5, ada2, ngg1/ada3 and sgf29), the DUB (deubiquitinating) module (ubp8, sgf11, sgf73 and sus1), the core or TAF (TBP-associated factor) module (taf5, taf6, taf9, taf10 and taf12), and the Tra1 or SPT (Suppressor of Ty) module (tra1, hfi1/ada1, spt3, spt7, spt8 and spt20). The Tra1/SPT module binds activators, the core module recruits TBP (TATA-binding protein), the HAT module contains the histone H3 acetyltransferase gcn5, and the DUB module comprises the histone H2B deubiquitinase ubp8.

Its subcellular location is the nucleus. It localises to the nucleoplasm. The enzyme catalyses Thiol-dependent hydrolysis of ester, thioester, amide, peptide and isopeptide bonds formed by the C-terminal Gly of ubiquitin (a 76-residue protein attached to proteins as an intracellular targeting signal).. Its function is as follows. Histone deubiquitinating enzyme component of the transcription coactivator SAGA complex. SAGA acts as a general cofactor required for essentially all RNA polymerase II transcription. At the promoters, SAGA is required for transcription pre-initiation complex (PIC) recruitment. It influences RNA polymerase II transcriptional activity through different activities such as TBP interaction (via core/TAF module) and promoter selectivity, interaction with transcription activators (via Tra1/SPT module), and chromatin modification through histone acetylation (via HAT module) and deubiquitination (via DUB module). SAGA preferentially acetylates histones H3 (to form H3K9ac, H3K14ac, H3K18ac and H3K23ac) and H2B and deubiquitinates histone H2B. SAGA interacts with DNA via upstream activating sequences (UASs). Within the DUB module, the correctly positioned zinc finger domains of sgf11 and sgf73 are both required to fully activate the ubiquitin hydrolase ubp8. The DUB module is also linked to the splicing efficiency of many transcripts. This is Probable ubiquitin carboxyl-terminal hydrolase 8 (ubp8) from Schizosaccharomyces pombe (strain 972 / ATCC 24843) (Fission yeast).